Consider the following 90-residue polypeptide: MSSGGLLLLLALLTLWAELTPISGHDRPTFCNLAPESGRCRGHLRRIYYNPDSNKCEVFFYGGCGGNDNNFETRKKCRQTCGAPRKGRPT.

An N-terminal signal peptide occupies residues 1 to 24 (MSSGGLLLLLALLTLWAELTPISG). Residues 31–81 (CNLAPESGRCRGHLRRIYYNPDSNKCEVFFYGGCGGNDNNFETRKKCRQTC) form the BPTI/Kunitz inhibitor domain. Disulfide bonds link Cys31-Cys81, Cys40-Cys64, and Cys56-Cys77. Residues 85-90 (RKGRPT) constitute a propeptide that is removed on maturation.

The protein belongs to the venom Kunitz-type family. In terms of tissue distribution, expressed by the venom gland.

The protein resides in the secreted. In terms of biological role, serine protease inhibitor that inhibits trypsin. This Daboia siamensis (Eastern Russel's viper) protein is Kunitz-type serine protease inhibitor C5.